The chain runs to 165 residues: P2Y purinoceptor 4 (165 aa).

The helical transmembrane segment at 1 to 16 (SDTLYVLSLPTLVYYY) threads the bilayer. Topologically, residues 17 to 30 (AARNHWPFGTGFCK) are extracellular. Residues 31–51 (FVRFLFYWNLYCSVLFLTCIS) traverse the membrane as a helical segment. Residues 52–74 (VHRYMGICHPLRALRWGRPRFAS) lie on the Cytoplasmic side of the membrane. Residues 75–95 (LLCLAVWLVVAGCLVPNLFFV) traverse the membrane as a helical segment. Residues 96 to 124 (TTSPNGTTILCHDTTRPEEFDHYVHFSSA) are Extracellular-facing. N-linked (GlcNAc...) asparagine glycosylation is present at asparagine 100. A helical membrane pass occupies residues 125–145 (VMVLLFGLPFLVTLVCYGLMA). Topologically, residues 146–165 (RRLYRPLPGAGQSSSRLRSL) are cytoplasmic.

Belongs to the G-protein coupled receptor 1 family.

The protein resides in the cell membrane. Its function is as follows. Receptor for UTP and UDP coupled to G-proteins that activate a phosphatidylinositol-calcium second messenger system. This chain is P2Y purinoceptor 4 (P2RY4), found in Cricetulus griseus (Chinese hamster).